Consider the following 135-residue polypeptide: Small ribosomal subunit protein uS9 (135 aa).

Belongs to the universal ribosomal protein uS9 family.

In Petrotoga mobilis (strain DSM 10674 / SJ95), this protein is Small ribosomal subunit protein uS9.